The chain runs to 79 residues: D-alanyl carrier protein (79 aa).

The Carrier domain maps to 2–79 (AEFKEQVLDI…MVIKKLEEIR (78 aa)). O-(pantetheine 4'-phosphoryl)serine is present on Ser-37.

The protein belongs to the DltC family. Post-translationally, 4'-phosphopantetheine is transferred from CoA to a specific serine of apo-DCP.

It localises to the cytoplasm. It functions in the pathway cell wall biogenesis; lipoteichoic acid biosynthesis. Functionally, carrier protein involved in the D-alanylation of lipoteichoic acid (LTA). The loading of thioester-linked D-alanine onto DltC is catalyzed by D-alanine--D-alanyl carrier protein ligase DltA. The DltC-carried D-alanyl group is further transferred to cell membrane phosphatidylglycerol (PG) by forming an ester bond, probably catalyzed by DltD. D-alanylation of LTA plays an important role in modulating the properties of the cell wall in Gram-positive bacteria, influencing the net charge of the cell wall. The chain is D-alanyl carrier protein from Bacillus anthracis (strain CDC 684 / NRRL 3495).